Reading from the N-terminus, the 886-residue chain is KH domain-containing protein hrpk-2 (886 aa).

Positions 359-368 (DNHFYNDKDS) are enriched in basic and acidic residues. The disordered stretch occupies residues 359–433 (DNHFYNDKDS…SHRKESACVD (75 aa)). 2 stretches are compositionally biased toward basic residues: residues 369–388 (GKHHRHRHRSKNNKKHKKHY) and 415–425 (HERKKRQRSSH). KH domains lie at 698–761 (KETV…IEKI) and 775–839 (PGIF…AYLT).

This is KH domain-containing protein hrpk-2 from Caenorhabditis elegans.